Reading from the N-terminus, the 621-residue chain is Myosin-binding protein C, slow-type (621 aa).

3 consecutive Ig-like C2-type domains span residues 1–53 (EEIV…VDLR), 54–142 (PLKI…HVID), and 144–241 (PKII…LWIS). At T28 the chain carries Phosphothreonine. Residue S233 is modified to Phosphoserine. Fibronectin type-III domains are found at residues 244–343 (LRLA…TSPP), 344–459 (TLLA…IEPP), and 556–621 (PPQA…VIGN). Phosphothreonine is present on T420. Residue Y445 is modified to Phosphotyrosine. One can recognise an Ig-like C2-type 4 domain in the interval 459–553 (PKIRIPRHLK…ASIDIQIVDR (95 aa)).

This sequence belongs to the immunoglobulin superfamily. MyBP family. As to quaternary structure, interacts with USP25 (isoform USP25m only); the interaction prevents proteasomal degradation of MYBPC1.

Functionally, thick filament-associated protein located in the crossbridge region of vertebrate striated muscle a bands. Slow skeletal protein that binds to both myosin and actin. In vitro, binds to native thin filaments and modifies the activity of actin-activated myosin ATPase. May modulate muscle contraction or may play a more structural role. The chain is Myosin-binding protein C, slow-type (Mybpc1) from Rattus norvegicus (Rat).